The primary structure comprises 213 residues: NADH dehydrogenase [ubiquinone] iron-sulfur protein 7, mitochondrial (213 aa).

The transit peptide at M1 to L31 directs the protein to the mitochondrion. Residues S30 to S42 show a composition bias toward low complexity. A disordered region spans residues S30–T52. [4Fe-4S] cluster is bound by residues C88, C89, C153, and C183.

It belongs to the complex I 20 kDa subunit family. In terms of assembly, complex I is composed of about 45 different subunits. This is a component of the iron-sulfur (IP) fragment of the enzyme. It depends on [4Fe-4S] cluster as a cofactor.

The protein localises to the mitochondrion. It carries out the reaction a ubiquinone + NADH + 5 H(+)(in) = a ubiquinol + NAD(+) + 4 H(+)(out). Its function is as follows. Core subunit of the mitochondrial membrane respiratory chain NADH dehydrogenase (Complex I) that is believed to belong to the minimal assembly required for catalysis. Complex I functions in the transfer of electrons from NADH to the respiratory chain. The immediate electron acceptor for the enzyme is believed to be ubiquinone. The chain is NADH dehydrogenase [ubiquinone] iron-sulfur protein 7, mitochondrial from Solanum tuberosum (Potato).